Reading from the N-terminus, the 814-residue chain is Leucine--tRNA ligase (814 aa).

Residues 42–52 carry the 'HIGH' region motif; it reads PYPSGNLHIGH. The 'KMSKS' region signature appears at 582-586; it reads KMSKS. Position 585 (lysine 585) interacts with ATP.

The protein belongs to the class-I aminoacyl-tRNA synthetase family.

The protein localises to the cytoplasm. It carries out the reaction tRNA(Leu) + L-leucine + ATP = L-leucyl-tRNA(Leu) + AMP + diphosphate. In Herpetosiphon aurantiacus (strain ATCC 23779 / DSM 785 / 114-95), this protein is Leucine--tRNA ligase.